The following is a 134-amino-acid chain: MTRATSSAPSQRMLRVGEQVRAAITQVLQRGEVRDDVIEATVISISEVRMSPDLKIATAYVTPLGVSDHSVVIEALNRHARYIRGRLGQQLRQMKYMPEVRFRDDTSFDNYKKIDELLRSPEVSRDLDGDNDEQ.

It belongs to the RbfA family. Monomer. Binds 30S ribosomal subunits, but not 50S ribosomal subunits or 70S ribosomes.

The protein localises to the cytoplasm. In terms of biological role, one of several proteins that assist in the late maturation steps of the functional core of the 30S ribosomal subunit. Associates with free 30S ribosomal subunits (but not with 30S subunits that are part of 70S ribosomes or polysomes). Required for efficient processing of 16S rRNA. May interact with the 5'-terminal helix region of 16S rRNA. The chain is Ribosome-binding factor A from Rhizobium leguminosarum bv. trifolii (strain WSM2304).